A 2431-amino-acid chain; its full sequence is Reducing polyketide synthase rads1 (2431 aa).

The region spanning 10–440 (RAPIAIIGLA…GTNAHIVLER (431 aa)) is the Ketosynthase family 3 (KS3) domain. Active-site for beta-ketoacyl synthase activity residues include C184, H319, and H363. The segment at 558–895 (FVFTGQGAQW…NLAAELFRRG (338 aa)) is malonyl-CoA:ACP transacylase (MAT) domain. Positions 944 to 1080 (KSILGAELPS…GLISIAYEDT (137 aa)) are N-terminal hotdog fold. The 324-residue stretch at 944 to 1267 (KSILGAELPS…LAELEVDDAA (324 aa)) folds into the PKS/mFAS DH domain. The tract at residues 946 to 1264 (ILGAELPSMD…DFRLAELEVD (319 aa)) is dehydratase (DH) domain. Residue H976 is the Proton acceptor; for dehydratase activity of the active site. A C-terminal hotdog fold region spans residues 1108–1267 (PETCSKERFY…LAELEVDDAA (160 aa)). Catalysis depends on D1174, which acts as the Proton donor; for dehydratase activity. The segment at 1705 to 2023 (GLLNTLHFVP…QGKHLGKMIL (319 aa)) is enoyl reductase (ER) domain. C1822 (phosphocysteine intermediate) is an active-site residue. The interval 2048-2228 (ATYLIVGGLG…VSVNLGIMRD (181 aa)) is ketoreductase (KR) domain. Positions 2346-2423 (VAAAIITEAL…TFAVQIAKKS (78 aa)) constitute a Carrier domain. At S2383 the chain carries O-(pantetheine 4'-phosphoryl)serine.

It functions in the pathway secondary metabolite biosynthesis. Reducing polyketide synthase; part of the gene cluster that mediates the biosynthesis of radicicol, a resorcylic acid lactone (RAL) that irreversibly inhibits the HSP90 molecular chaperone, an important target for cancer chemotherapy. The cluster encodes only two apparent post-PKS enzymes, a cytochrome P450 monooxygenase (radP) and a non-heme halogenase (radH) that introduce the epoxide and the chlorine, respectively. If this cluster includes all the genes required for radicicol biosynthesis, the remaining structural features of radicicol are presumably generated by the PKSs rads1 and rads2. The C-2' ketone could arise if the R-PKS rads1 and NR-PKS rads2 each carry out four iterations, in contrast to the five iteration-three iteration split for the hypothemycin PKSs. The origin of the cis 5',6' double bond is not known. The radicicol R-PKS radS1 ER domain may catalyze either double bond isomerization or reduction in the third iteration. This is Reducing polyketide synthase rads1 from Floropilus chiversii (Chaetomium chiversii).